The primary structure comprises 254 residues: Cobalt transport protein CbiM (254 aa).

The N-terminal stretch at 1 to 31 (MKTILRPFTLLSRSIFLALFVLFLWSPDAHA) is a signal peptide. 6 consecutive transmembrane segments (helical) span residues 37–57 (GFLP…FLVV), 74–94 (LLLA…IPSV), 106–126 (LGAV…VLLF), 128–148 (ALLL…SMAI), 169–189 (WLAV…VTSL), and 212–232 (IFAL…VMVF).

It belongs to the CbiM family. As to quaternary structure, forms an energy-coupling factor (ECF) transporter complex composed of an ATP-binding protein (A component, CbiO), a transmembrane protein (T component, CbiQ) and 2 possible substrate-capture proteins (S components, CbiM and CbiN) of unknown stoichimetry.

It is found in the cell inner membrane. It functions in the pathway cofactor biosynthesis; adenosylcobalamin biosynthesis. Part of the energy-coupling factor (ECF) transporter complex CbiMNOQ involved in cobalt import. In Chlorobium limicola (strain DSM 245 / NBRC 103803 / 6330), this protein is Cobalt transport protein CbiM.